Reading from the N-terminus, the 136-residue chain is MQSREPSGWRTAERRRGWRCRGVPTPSGDRGPGAARPAARGGAGETTGQQRPLQVPGASAAAARTRLLRWHHRVPSPRATRSPGSIRRTSPCSGGPDRPERPECADACCYLLDPFTLPLIQDFFRGCAASDFDRRD.

Residues 1–100 (MQSREPSGWR…PCSGGPDRPE (100 aa)) form a disordered region. Residues 66–75 (RLLRWHHRVP) are compositionally biased toward basic residues.

This is an uncharacterized protein from Homo sapiens (Human).